We begin with the raw amino-acid sequence, 343 residues long: Methionine import ATP-binding protein MetN (343 aa).

Residues 2–241 (IKLSNITKVF…PKTPLAQKFI (240 aa)) enclose the ABC transporter domain. 38-45 (GASGAGKS) provides a ligand contact to ATP.

It belongs to the ABC transporter superfamily. Methionine importer (TC 3.A.1.24) family. The complex is composed of two ATP-binding proteins (MetN), two transmembrane proteins (MetI) and a solute-binding protein (MetQ).

It is found in the cell inner membrane. It carries out the reaction L-methionine(out) + ATP + H2O = L-methionine(in) + ADP + phosphate + H(+). The catalysed reaction is D-methionine(out) + ATP + H2O = D-methionine(in) + ADP + phosphate + H(+). Its function is as follows. Part of the ABC transporter complex MetNIQ involved in methionine import. Responsible for energy coupling to the transport system. This Shigella flexneri serotype 5b (strain 8401) protein is Methionine import ATP-binding protein MetN.